We begin with the raw amino-acid sequence, 66 residues long: MKQGTVKWFNAEKGFGFIEVEGENDVFVHFSAINQDGYKSLEEGQSVEFEVVEGDRGPQAANVVKL.

Positions 1-66 (MKQGTVKWFN…GPQAANVVKL (66 aa)) constitute a CSD domain.

It is found in the cytoplasm. Its function is as follows. Involved in cold stress response. This is Cold shock protein CspA (cspA) from Staphylococcus haemolyticus (strain JCSC1435).